The chain runs to 270 residues: Basigin (270 aa).

Positions 1 to 21 are cleaved as a signal peptide; the sequence is MAAVLFALLALALLRAGGASA. Residues 22-103 enclose the Ig-like C2-type domain; that stretch reads AAGTVTTSVQ…TGEATLTVDG (82 aa). At 22–207 the chain is on the extracellular side; sequence AAGTVTTSVQ…VTLRVRSRLA (186 aa). 2 disulfide bridges follow: cysteine 41–cysteine 87 and cysteine 126–cysteine 185. 4 N-linked (GlcNAc...) asparagine glycosylation sites follow: asparagine 44, asparagine 75, asparagine 152, and asparagine 186. One can recognise an Ig-like V-type domain in the interval 105–203; it reads PRIKAVKKSE…DAAVVTLRVR (99 aa). Residues 208-228 traverse the membrane as a helical segment; it reads ALWPFLGIVAEVLVLVTVIFI. Residues 229–270 lie on the Cytoplasmic side of the membrane; the sequence is YEKRRKPDEVLDDEDAGAAPLKSSGHHVNDDKGKNVRQRNAS. Positions 239–270 are disordered; it reads LDDEDAGAAPLKSSGHHVNDDKGKNVRQRNAS. Residue serine 252 is modified to Phosphoserine.

Homooligomer. Interacts with VEGFA, KDR/VEGFR2, PPIA/CYPA, SLC1A3, SLC16A12, SLC16A11, ATP1B2, MAG, L1CAM and AJAP1. Interacts with PPIL2; regulates BSG transport to the cell membrane. Interacts with XKR8; promoting its localization at the cell membrane. Interacts with SLC16A3; interaction mediates SLC16A3 targeting to the plasma membrane. Interacts with SLC16A1; interaction mediates SLC16A1 targeting to the plasma membrane. Interacts with SLC16A6; this interaction mediates targeting to the plasma membrane.

The protein localises to the cell membrane. Its subcellular location is the endoplasmic reticulum membrane. The protein resides in the basolateral cell membrane. In terms of biological role, signaling receptor for cyclophilins, essential for PPIA/CYPA and PPIB/CYPB-dependent signaling related to chemotaxis and adhesion of immune cells. Plays an important role in targeting the monocarboxylate transporters SLC16A1/GLUT1, SLC16A3, SLC16A8, SLC16A11 and SLC16A12 to the plasma membrane. Acts as a coreceptor for vascular endothelial growth factor receptor 2 (KDR/VEGFR2) in endothelial cells enhancing its VEGFA-mediated activation and downstream signaling. Promotes angiogenesis through EPAS1/HIF2A-mediated up-regulation of VEGFA and KDR/VEGFR2 in endothelial cells. This is Basigin (BSG) from Oryctolagus cuniculus (Rabbit).